The following is a 456-amino-acid chain: Chromosomal replication initiator protein DnaA 1 (456 aa).

The domain I, interacts with DnaA modulators stretch occupies residues 1 to 68 (MRAWEEFLLL…KASLINNNGK (68 aa)). The interval 68 to 101 (KPIRVRVTSLDKSTPFKETQIQQEKTAYFTMKYG) is domain II. The segment at 102-320 (DIDPNMSFAN…HALTTLAKRV (219 aa)) is domain III, AAA+ region. ATP is bound by residues serine 150, glycine 152, lysine 153, and threonine 154. Positions 321-456 (AYKKLSHQML…AYQSLDFIED (136 aa)) are domain IV, binds dsDNA.

This sequence belongs to the DnaA family. As to quaternary structure, oligomerizes as a right-handed, spiral filament on DNA at oriC.

The protein resides in the cytoplasm. In terms of biological role, plays an essential role in the initiation and regulation of chromosomal replication. ATP-DnaA binds to the origin of replication (oriC) to initiate formation of the DNA replication initiation complex once per cell cycle. Binds the DnaA box (a 9 base pair repeat at the origin) and separates the double-stranded (ds)DNA. Forms a right-handed helical filament on oriC DNA; dsDNA binds to the exterior of the filament while single-stranded (ss)DNA is stabiized in the filament's interior. The ATP-DnaA-oriC complex binds and stabilizes one strand of the AT-rich DNA unwinding element (DUE), permitting loading of DNA polymerase. After initiation quickly degrades to an ADP-DnaA complex that is not apt for DNA replication. Binds acidic phospholipids. This Chlamydia trachomatis serovar D (strain ATCC VR-885 / DSM 19411 / UW-3/Cx) protein is Chromosomal replication initiator protein DnaA 1.